A 643-amino-acid chain; its full sequence is 3D-(3,5/4)-trihydroxycyclohexane-1,2-dione hydrolase (643 aa).

Position 65 (Glu65) interacts with thiamine diphosphate. The tract at residues Ser441–Gly521 is thiamine pyrophosphate binding. Mg(2+)-binding residues include Asp492 and Asn519.

Belongs to the TPP enzyme family. Mg(2+) serves as cofactor. It depends on thiamine diphosphate as a cofactor.

It carries out the reaction 3D-3,5/4-trihydroxycyclohexane-1,2-dione + H2O = 5-deoxy-D-glucuronate + H(+). The protein operates within polyol metabolism; myo-inositol degradation into acetyl-CoA; acetyl-CoA from myo-inositol: step 3/7. Functionally, involved in the cleavage of the C1-C2 bond of 3D-(3,5/4)-trihydroxycyclohexane-1,2-dione (THcHDO) to yield 5-deoxy-glucuronate (5DG). The protein is 3D-(3,5/4)-trihydroxycyclohexane-1,2-dione hydrolase of Clostridium botulinum (strain Alaska E43 / Type E3).